The primary structure comprises 114 residues: Flagellar hook-basal body complex protein FliE (114 aa).

It belongs to the FliE family.

The protein resides in the bacterial flagellum basal body. In Burkholderia multivorans (strain ATCC 17616 / 249), this protein is Flagellar hook-basal body complex protein FliE.